Here is a 357-residue protein sequence, read N- to C-terminus: NADH-quinone oxidoreductase subunit H (357 aa).

8 helical membrane passes run 25-45 (ILII…VVAY), 94-114 (IYLF…VWVV), 130-150 (LLYV…AGWA), 166-186 (LLVS…MIAG), 201-221 (IIYW…ISAL), 254-274 (FFLA…VMFF), 294-314 (VPGI…YLWV), and 329-349 (LSWK…ALMT).

This sequence belongs to the complex I subunit 1 family. In terms of assembly, NDH-1 is composed of 14 different subunits. Subunits NuoA, H, J, K, L, M, N constitute the membrane sector of the complex.

It is found in the cell inner membrane. It carries out the reaction a quinone + NADH + 5 H(+)(in) = a quinol + NAD(+) + 4 H(+)(out). In terms of biological role, NDH-1 shuttles electrons from NADH, via FMN and iron-sulfur (Fe-S) centers, to quinones in the respiratory chain. The immediate electron acceptor for the enzyme in this species is believed to be ubiquinone. Couples the redox reaction to proton translocation (for every two electrons transferred, four hydrogen ions are translocated across the cytoplasmic membrane), and thus conserves the redox energy in a proton gradient. This subunit may bind ubiquinone. The chain is NADH-quinone oxidoreductase subunit H from Ruthia magnifica subsp. Calyptogena magnifica.